We begin with the raw amino-acid sequence, 306 residues long: Homeobox protein HMX3 (306 aa).

A disordered region spans residues 95–181 (HTPRTEVPDK…DKKPCRKKKT (87 aa)). 2 stretches are compositionally biased toward basic and acidic residues: residues 117–143 (GERD…KSPE) and 153–174 (EEGK…PDKK). A DNA-binding region (homeobox) is located at residues 178–237 (KKKTRTVFSRSQVFQLESTFDMKRYLSSSERAGLAASLHLTETQVKIWFQNRRNKWKRQL).

The protein belongs to the HMX homeobox family.

The protein resides in the nucleus. In terms of biological role, transcription factor involved in specification of neuronal cell types and which is required for inner ear and hypothalamus development. Binds to the 5'-CAAGTG-3' core sequence. May act as a stage-specific inhibitor of anf1 in the anterior neural plate during the development. The polypeptide is Homeobox protein HMX3 (hmx3) (Xenopus laevis (African clawed frog)).